We begin with the raw amino-acid sequence, 267 residues long: tRNA pseudouridine synthase A (267 aa).

Aspartate 51 acts as the Nucleophile in catalysis. Substrate is bound at residue tyrosine 109.

This sequence belongs to the tRNA pseudouridine synthase TruA family. Homodimer.

It carries out the reaction uridine(38/39/40) in tRNA = pseudouridine(38/39/40) in tRNA. Formation of pseudouridine at positions 38, 39 and 40 in the anticodon stem and loop of transfer RNAs. The polypeptide is tRNA pseudouridine synthase A (Staphylococcus epidermidis (strain ATCC 35984 / DSM 28319 / BCRC 17069 / CCUG 31568 / BM 3577 / RP62A)).